Reading from the N-terminus, the 355-residue chain is RGG repeats nuclear RNA binding protein A (355 aa).

N-acetylalanine is present on Ala-2. The segment at 26 to 225 (KIDKSKKSGQ…VEEKEPEDKE (200 aa)) is disordered. The span at 37–47 (SSLPAKSAPKL) shows a compositional bias: low complexity. 2 stretches are compositionally biased toward gly residues: residues 67–81 (RGGG…GRGG) and 114–141 (GGGA…SNEG). Residues 132–139 (GRRGGFSN) carry the Nuclear localization signal motif. Positions 143–168 (DGERPRRAFERRSGTGRGSDFKRDGS) are enriched in basic and acidic residues. Positions 145–155 (ERPRRAFERRS) match the Arginine-rich RNA-binding motif E-R-P-R-R-X-[F/Y]-[E/D]-R-R-S motif. Positions 177-190 (GEEIAAETEAVAGV) are enriched in low complexity. Composition is skewed to basic and acidic residues over residues 191-202 (ETEKDVGEKPAV) and 209-225 (ANKE…EDKE). The region spanning 234–289 (ILEEKKKALQSLTTSERKVDTKVFESMQQLSNKKSNDEIFIKLGSDKDKRKDDKEE) is the FF domain. The residue at position 268 (Ser-268) is a Phosphoserine. The span at 277–292 (GSDKDKRKDDKEEKAK) shows a compositional bias: basic and acidic residues. Residues 277–355 (GSDKDKRKDD…AAQFPSLGGK (79 aa)) are disordered. Residues 323 to 333 (GRGGVSSGESG) show a composition bias toward gly residues. The residue at position 351 (Ser-351) is a Phosphoserine.

Belongs to the SERBP1-HABP4 family. As to expression, expressed in seedlings, leaves, roots, inflorescences, and siliques. Constitutively expressed in seedlings and roots.

It is found in the cytoplasm. It localises to the perinuclear region. The protein localises to the nucleus. Functionally, ribosome-binding protein that acts as a regulator of mRNA translation by promoting ribosome inactivation. Binds RNA. Regulates responses to abscisic acid (ABA). Promotes stomata closure in drought conditions. Involved in resistance to salt and drought stresses via the accumulation of Pro. The chain is RGG repeats nuclear RNA binding protein A from Arabidopsis thaliana (Mouse-ear cress).